Here is a 104-residue protein sequence, read N- to C-terminus: Large ribosomal subunit protein uL24 (104 aa).

It belongs to the universal ribosomal protein uL24 family. In terms of assembly, part of the 50S ribosomal subunit.

In terms of biological role, one of two assembly initiator proteins, it binds directly to the 5'-end of the 23S rRNA, where it nucleates assembly of the 50S subunit. Functionally, one of the proteins that surrounds the polypeptide exit tunnel on the outside of the subunit. This chain is Large ribosomal subunit protein uL24, found in Rhodopseudomonas palustris (strain BisA53).